A 165-amino-acid chain; its full sequence is Putative protein FAM86C2P (165 aa).

It belongs to the class I-like SAM-binding methyltransferase superfamily. EEF2KMT family.

The protein is Putative protein FAM86C2P (FAM86C2P) of Homo sapiens (Human).